A 207-amino-acid chain; its full sequence is MTAGIFGRKIGMTQIFDKDGSAIPVTLVKADPCQVCQIKTTKTDGYDAIQVGYLEEKLSKISKPIQGHLQKCGSTGYRKFGEFRVEDPETYNLGDQITTSAFSVGQKVRVTGTSIGKGFAGNQKRHNFSRGPMTHGSKNHRLPGSIGAGSTPGRVYPGKKMAGHLGNTKTTIKNSEILFVSEKENILILKGSLPGKAKNILRIAAKV.

Residues 115–151 (IGKGFAGNQKRHNFSRGPMTHGSKNHRLPGSIGAGST) form a disordered region.

It belongs to the universal ribosomal protein uL3 family. Part of the 50S ribosomal subunit.

It localises to the plastid. The protein localises to the chloroplast. In terms of biological role, one of the primary rRNA binding proteins, it binds directly near the 3'-end of the 23S rRNA, where it nucleates assembly of the 50S subunit. The sequence is that of Large ribosomal subunit protein uL3c (rpl3) from Emiliania huxleyi (Coccolithophore).